Here is an 82-residue protein sequence, read N- to C-terminus: High-potential iron-sulfur protein (82 aa).

Residues Cys-42, Cys-45, Cys-60, and Cys-74 each coordinate [4Fe-4S] cluster.

Belongs to the high-potential iron-sulfur protein (HiPIP) family. In terms of assembly, homodimer.

It localises to the periplasm. Specific class of high-redox-potential 4Fe-4S ferredoxins. Functions in anaerobic electron transport in most purple and in some other photosynthetic bacteria and in at least one genus (Paracoccus) of halophilic, denitrifying bacteria. This Marichromatium purpuratum (Chromatium purpuratum) protein is High-potential iron-sulfur protein (hip).